The chain runs to 454 residues: Mitochondrial dynamics protein MID49 (454 aa).

Topologically, residues methionine 1–aspartate 22 are mitochondrial intermembrane. Serine 13 is modified (phosphoserine). The helical transmembrane segment at phenylalanine 23–alanine 43 threads the bilayer. The Cytoplasmic segment spans residues threonine 44 to leucine 454. A disordered region spans residues alanine 76–serine 119. A compositionally biased stretch (low complexity) spans alanine 88–proline 103.

This sequence belongs to the MID49/MID51 family. As to quaternary structure, interacts with DNM1L. In terms of tissue distribution, expressed in all tissues tested with highest expression in heart and skeletal muscle.

Its subcellular location is the mitochondrion outer membrane. Functionally, mitochondrial outer membrane protein involved in the regulation of mitochondrial organization. It is required for mitochondrial fission and promotes the recruitment and association of the fission mediator dynamin-related protein 1 (DNM1L) to the mitochondrial surface independently of the mitochondrial fission FIS1 and MFF proteins. Regulates DNM1L GTPase activity. The chain is Mitochondrial dynamics protein MID49 (MIEF2) from Homo sapiens (Human).